We begin with the raw amino-acid sequence, 283 residues long: MLTNTERVKVLSDVTILQKFSSRIIVIKYGGAAMKNQKLKDHVISDLVFLSFIGLRPILVHGGGPEINFWLDQLKILPKFENGVRVTDQPTMDIVEMVLVGRVNKDLVASINKQGGKSVGLSGKDGLLITSRPSDKPNLGFVGEVQNVDTNLLEILINNNYIPVIASVAADKQGQSYNINADTVAGEIAARLNAEKLILLTDTPGILRNASDATTLISHLSIQEARDLTKTAVISGGMIPKVNCCIRSLAQGVASAHILDGRIDHALLLEILTDQGIGSMLVV.

Substrate is bound by residues 63-64, Arg-85, and Asn-178; that span reads GG.

Belongs to the acetylglutamate kinase family. ArgB subfamily.

The protein localises to the plastid. Its subcellular location is the chloroplast. The catalysed reaction is N-acetyl-L-glutamate + ATP = N-acetyl-L-glutamyl 5-phosphate + ADP. It functions in the pathway amino-acid biosynthesis; L-arginine biosynthesis; N(2)-acetyl-L-ornithine from L-glutamate: step 2/4. Functionally, catalyzes the ATP-dependent phosphorylation of N-acetyl-L-glutamate. This is Acetylglutamate kinase from Porphyra purpurea (Red seaweed).